The sequence spans 122 residues: MICOS complex subunit MIC13 homolog QIL1 (122 aa).

Residues 9–25 (GGLVAATVYYTQKVGIW) traverse the membrane as a helical segment.

Belongs to the MICOS complex subunit Mic13 family. Component of the mitochondrial contact site and cristae organizing system (MICOS) complex.

The protein resides in the mitochondrion inner membrane. Component of the MICOS complex, a large protein complex of the mitochondrial inner membrane that plays crucial roles in the maintenance of crista junctions, inner membrane architecture, and formation of contact sites to the outer membrane. In Drosophila melanogaster (Fruit fly), this protein is MICOS complex subunit MIC13 homolog QIL1.